The primary structure comprises 347 residues: tRNA N6-adenosine threonylcarbamoyltransferase (347 aa).

Fe cation-binding residues include His115 and His119. Residues 137-141 (LASGG), Asp170, Gly183, and Asn281 each bind substrate. Asp309 provides a ligand contact to Fe cation.

Belongs to the KAE1 / TsaD family. The cofactor is Fe(2+).

Its subcellular location is the cytoplasm. The enzyme catalyses L-threonylcarbamoyladenylate + adenosine(37) in tRNA = N(6)-L-threonylcarbamoyladenosine(37) in tRNA + AMP + H(+). Its function is as follows. Required for the formation of a threonylcarbamoyl group on adenosine at position 37 (t(6)A37) in tRNAs that read codons beginning with adenine. Is involved in the transfer of the threonylcarbamoyl moiety of threonylcarbamoyl-AMP (TC-AMP) to the N6 group of A37, together with TsaE and TsaB. TsaD likely plays a direct catalytic role in this reaction. This chain is tRNA N6-adenosine threonylcarbamoyltransferase, found in Methylorubrum extorquens (strain CM4 / NCIMB 13688) (Methylobacterium extorquens).